A 737-amino-acid polypeptide reads, in one-letter code: Glycogen [starch] synthase, muscle (737 aa).

The residue at position 8 (S8) is a Phosphoserine; by AMPK and PKA. Phosphoserine is present on S11. UDP is bound at residue K39. H205 and R211 together coordinate UDP-alpha-D-glucose. Alpha-D-glucose 6-phosphate-binding residues include H291, E292, Q294, H297, and K301. A UDP-binding site is contributed by R331. R331 contributes to the UDP-alpha-D-glucose binding site. Position 412 is a phosphoserine (S412). H501 contributes to the alpha-D-glucose 6-phosphate binding site. E510, W512, and G513 together coordinate UDP-alpha-D-glucose. UDP is bound at residue T515. Residues R582 and R586 each coordinate alpha-D-glucose 6-phosphate. Residues 634 to 737 are disordered; that stretch reads YRYPRPASVP…PTSSLGEERN (104 aa). A phosphoserine mark is found at S641, S645, S649, and S652. A Phosphoserine; by GSK3-alpha and GSK3-beta modification is found at S653. S657 is subject to Phosphoserine; by CK2. Residues 658–681 show a composition bias toward acidic residues; that stretch reads EDEEDPRNGPLEEDGERYDEDEEA. Basic and acidic residues predominate over residues 682–695; it reads AKDRRNIRAPEWPR. S698 is modified (phosphoserine). The span at 698-714 shows a compositional bias: polar residues; sequence SCTSSTSGSKRNSVDTA. T700 carries the post-translational modification Phosphothreonine. Position 710 is a phosphoserine (S710). Residues 715–737 show a composition bias toward low complexity; it reads TSSSLSTPSEPLSPTSSLGEERN. T721 carries the phosphothreonine modification. S727 and S731 each carry phosphoserine.

This sequence belongs to the glycosyltransferase 3 family. In terms of assembly, part of the GYS1-GYG1 complex, a heterooctamer composed of a tetramer of GYS1 and 2 dimers of GYG1, where each GYS1 protomer binds to one GYG1 subunit (via GYG1 C-terminus); the GYS1 tetramer may dissociate from GYG1 dimers to continue glycogen polymerization on its own. Phosphorylation at Ser-8 by AMPK inactivates the enzyme activity. Primed phosphorylation at Ser-657 (site 5) by CSNK2A1 and CSNK2A2 is required for inhibitory phosphorylation at Ser-641 (site 3a), Ser-645 (site 3b), Ser-649 (site 3c) and Ser-653 (site 4) by GSK3A an GSK3B. Phosphorylated at Ser-641 by DYRK2, leading to inactivation. Phosphorylated at Ser-641 by PASK, leading to inactivation; phosphorylation by PASK is inhibited by glycogen. Dephosphorylation at Ser-641 and Ser-645 by PP1 activates the enzyme. As to expression, expressed in skeletal muscle and most other cell types where glycogen is present.

The catalysed reaction is [(1-&gt;4)-alpha-D-glucosyl](n) + UDP-alpha-D-glucose = [(1-&gt;4)-alpha-D-glucosyl](n+1) + UDP + H(+). It participates in glycan biosynthesis; glycogen biosynthesis. With respect to regulation, allosteric activation by glucose-6-phosphate. Phosphorylation reduces enzyme activity by constraining a tense conformation of the tetramer through inter-subunit interaction. Phosphorylation reduces the activity towards UDP-glucose. When in the non-phosphorylated state, glycogen synthase does not require glucose-6-phosphate as an allosteric activator; when phosphorylated it does. Glycogen synthase participates in the glycogen biosynthetic process along with glycogenin and glycogen branching enzyme. Extends the primer composed of a few glucose units formed by glycogenin by adding new glucose units to it. In this context, glycogen synthase transfers the glycosyl residue from UDP-Glc to the non-reducing end of alpha-1,4-glucan. The chain is Glycogen [starch] synthase, muscle from Homo sapiens (Human).